A 184-amino-acid polypeptide reads, in one-letter code: Probable type 3 secretion system regulator AscH (184 aa).

A disordered region spans residues 1–25 (MKIEGSDQLGGEQPQRQPLPPESMA).

Belongs to the YopR family.

The protein resides in the secreted. May be involved in the regulation of the assembly of the type III secretion system (T3SS), also called injectisome, which is used to inject bacterial effector proteins into eukaryotic host cells. May control the polymerization of the needle. This is Probable type 3 secretion system regulator AscH from Aeromonas salmonicida subsp. salmonicida.